Reading from the N-terminus, the 738-residue chain is Flagellar radial spoke protein 2 (738 aa).

Residue R104 is modified to Asymmetric dimethylarginine. Acidic residues-rich tracts occupy residues 134–153 and 161–182; these read PDWV…EDEA and EGEE…DGEG. Positions 134 to 189 are disordered; the sequence is PDWVAPEDDEAAAVETEDEAAGGAALAEGEEPPPEPEPEPEAAPEDGEGDAPAPKI. R260 carries the post-translational modification Asymmetric dimethylarginine. The interval 357 to 426 is disordered; sequence AAAEAAAAAP…PPKPKKKKKV (70 aa). Positions 371-415 are enriched in acidic residues; that stretch reads EGEEGEGEAPPAEEEPPAEEEAEEEEEEAEEGAEEGAEEGEEGEE. An asymmetric dimethylarginine mark is found at R453, R538, and R615. The disordered stretch occupies residues 674–738; the sequence is AEAGEGEAVA…SSEESKAAAE (65 aa). The span at 689–730 shows a compositional bias: low complexity; the sequence is PAEAEAAPAEGEAAPPAEGEGEAQPAQEGSNSSSSSSDSSSS.

Belongs to the dpy-30 family. Asymmetrically dimethylated at Arg-104, Arg-260, Arg-453, Arg-538 and Arg-615 during flagellum resorption. Probably methylated by PRMT1.

It localises to the cytoplasm. The protein resides in the cytoskeleton. Its subcellular location is the flagellum axoneme. Functionally, flagellar radial spokes contribute to the regulation of dynein arm activity and thus the pattern of flagellar bending. They consist of a thin stalk, which is attached to the a subfiber of the outer doublet microtubule, and a bulbous head, which is attached to the stalk and appears to interact with the projections from the central pair of microtubules. Binds calmodulin in a calcium-dependent manner. This Chlamydomonas reinhardtii (Chlamydomonas smithii) protein is Flagellar radial spoke protein 2.